The following is a 301-amino-acid chain: Protoheme IX farnesyltransferase (301 aa).

A run of 8 helical transmembrane segments spans residues 30–50 (VISL…PKAI), 55–75 (IIVS…GGMI), 106–126 (AYAI…LANP), 127–147 (LTAL…SIWL), 152–172 (WWNI…GFAA), 177–197 (FTLL…GHFW), 233–253 (ALMV…YLIV), and 281–301 (FKLS…VKLI).

This sequence belongs to the UbiA prenyltransferase family. Protoheme IX farnesyltransferase subfamily.

It is found in the cell membrane. It carries out the reaction heme b + (2E,6E)-farnesyl diphosphate + H2O = Fe(II)-heme o + diphosphate. Its pathway is porphyrin-containing compound metabolism; heme O biosynthesis; heme O from protoheme: step 1/1. Converts heme B (protoheme IX) to heme O by substitution of the vinyl group on carbon 2 of heme B porphyrin ring with a hydroxyethyl farnesyl side group. The chain is Protoheme IX farnesyltransferase from Sulfurisphaera tokodaii (strain DSM 16993 / JCM 10545 / NBRC 100140 / 7) (Sulfolobus tokodaii).